A 551-amino-acid polypeptide reads, in one-letter code: MTYSTVSINTPPPYLTLACNEKLPTVLSIAGTDPSGGAGIEADVKTITAHRCYAMTCITALNAQTPVKVYSINNTPKEVVFQTLESNLKDMKCNVIKTGMLTAAAIEVLHEKLLQLGENRPKLVVDPVLVATSGSSLAGKDIVSLITEKVAPFADILTPNIPECYKLLGEERKVNGLQDIFQIAKDLAKITKCSNILVKGGHIPWNDEKEKYITDVLFLGAEQKFIIFKGNFVNTTHTHGTGCTLASAIASNLARGYSLPQSVYGGIEYVQNAVAIGCDVTKETVKDNGPINHVYAVEIPLEKMLSDECFTASDVIPKKPLKSAADKIPGGNFYEYLINHPKVKPHWDSYINHEFVKKVADGTLERKKFQFFIEQDYAYLVDYARVHCIAGSKAPCLEDMEKELVIVGGVRTEMGQHEKRLKEVFGVKDPDYFQKIKRGPALRAYSRYFNDVSRRGNWQELVASLTPCLMGYGEALTKMKGKVTAPEGSVYHEWCETYASSWYREAMDEGEKLLNHILETYPPEQLDTLVTIYAEVCELETNFWTAALEYE.

A 4-amino-5-hydroxymethyl-2-methylpyrimidine-binding site is contributed by Gln-64. The active-site Nucleophile is the Cys-468. Glu-540 acts as the Proton donor in catalysis.

It in the N-terminal section; belongs to the ThiD family. In the C-terminal section; belongs to the thiaminase-2 family.

The catalysed reaction is 4-amino-5-hydroxymethyl-2-methylpyrimidine + ATP = 4-amino-2-methyl-5-(phosphooxymethyl)pyrimidine + ADP + H(+). The enzyme catalyses 4-amino-2-methyl-5-(phosphooxymethyl)pyrimidine + ATP = 4-amino-2-methyl-5-(diphosphooxymethyl)pyrimidine + ADP. It carries out the reaction thiamine + H2O = 5-(2-hydroxyethyl)-4-methylthiazole + 4-amino-5-hydroxymethyl-2-methylpyrimidine + H(+). Its pathway is cofactor biosynthesis; thiamine diphosphate biosynthesis; 4-amino-2-methyl-5-diphosphomethylpyrimidine from 5-amino-1-(5-phospho-D-ribosyl)imidazole: step 2/3. The protein operates within cofactor biosynthesis; thiamine diphosphate biosynthesis; 4-amino-2-methyl-5-diphosphomethylpyrimidine from 5-amino-1-(5-phospho-D-ribosyl)imidazole: step 3/3. In terms of biological role, trifunctional protein with both thiamine biosynthetic and degradative activity. Within the thiamine biosynthesis pathway, catalyzes the phosphorylation of hydroxymethylpyrimidine (HMP) to hydroxymethylpyrimidine phosphate (HMP-P), as well as of HMP-P to HMP-PP. Also has thiaminase II activity and degrades thiamine using water as the nucleophile, resulting only in the formation of HMP (4-amino-2-methyl-5-hydroxymethylpyrimidine) and Thz (4-methyl-5-thiazole ethanol). This is Hydroxymethylpyrimidine/phosphomethylpyrimidine kinase THI20 from Saccharomyces cerevisiae (strain ATCC 204508 / S288c) (Baker's yeast).